A 353-amino-acid chain; its full sequence is DNA-directed RNA polymerase subunit alpha (353 aa).

The alpha N-terminal domain (alpha-NTD) stretch occupies residues 1-245; sequence MEKIQKITYK…AHFQIIGNIN (245 aa). Residues 261 to 353 form an alpha C-terminal domain (alpha-CTD) region; it reads EREIKSTTPI…QLNNSEEGEE (93 aa).

Belongs to the RNA polymerase alpha chain family. In terms of assembly, homodimer. The RNAP catalytic core consists of 2 alpha, 1 beta, 1 beta' and 1 omega subunit. When a sigma factor is associated with the core the holoenzyme is formed, which can initiate transcription.

It catalyses the reaction RNA(n) + a ribonucleoside 5'-triphosphate = RNA(n+1) + diphosphate. Functionally, DNA-dependent RNA polymerase catalyzes the transcription of DNA into RNA using the four ribonucleoside triphosphates as substrates. This is DNA-directed RNA polymerase subunit alpha from Mycoplasma sp.